Reading from the N-terminus, the 140-residue chain is Cytochrome c-type biogenesis protein CcmE (140 aa).

The Cytoplasmic segment spans residues 1–7 (MTKRQNR). The helical; Signal-anchor for type II membrane protein transmembrane segment at 8–28 (MVLVALLVIGVSLAGYLGLKA) threads the bilayer. The Periplasmic segment spans residues 29-140 (FNENLLYFLS…DALEKAKNKQ (112 aa)). The heme site is built by histidine 120 and tyrosine 124.

This sequence belongs to the CcmE/CycJ family.

The protein resides in the cell inner membrane. Its function is as follows. Heme chaperone required for the biogenesis of c-type cytochromes. Transiently binds heme delivered by CcmC and transfers the heme to apo-cytochromes in a process facilitated by CcmF and CcmH. The protein is Cytochrome c-type biogenesis protein CcmE of Vesicomyosocius okutanii subsp. Calyptogena okutanii (strain HA).